The sequence spans 101 residues: Urease subunit beta (101 aa).

Belongs to the urease beta subunit family. Heterotrimer of UreA (gamma), UreB (beta) and UreC (alpha) subunits. Three heterotrimers associate to form the active enzyme.

It is found in the cytoplasm. It catalyses the reaction urea + 2 H2O + H(+) = hydrogencarbonate + 2 NH4(+). It participates in nitrogen metabolism; urea degradation; CO(2) and NH(3) from urea (urease route): step 1/1. The polypeptide is Urease subunit beta (Dechloromonas aromatica (strain RCB)).